The following is a 1133-amino-acid chain: Error-prone DNA polymerase (1133 aa).

The protein belongs to the DNA polymerase type-C family. DnaE2 subfamily.

It is found in the cytoplasm. The catalysed reaction is DNA(n) + a 2'-deoxyribonucleoside 5'-triphosphate = DNA(n+1) + diphosphate. In terms of biological role, DNA polymerase involved in damage-induced mutagenesis and translesion synthesis (TLS). It is not the major replicative DNA polymerase. This chain is Error-prone DNA polymerase, found in Anaeromyxobacter sp. (strain K).